A 134-amino-acid chain; its full sequence is Phosphoribosyl-AMP cyclohydrolase (134 aa).

Mg(2+) is bound at residue D78. A Zn(2+)-binding site is contributed by C79. Positions 80 and 82 each coordinate Mg(2+). 2 residues coordinate Zn(2+): C96 and C103.

The protein belongs to the PRA-CH family. As to quaternary structure, homodimer. The cofactor is Mg(2+). Requires Zn(2+) as cofactor.

Its subcellular location is the cytoplasm. It catalyses the reaction 1-(5-phospho-beta-D-ribosyl)-5'-AMP + H2O = 1-(5-phospho-beta-D-ribosyl)-5-[(5-phospho-beta-D-ribosylamino)methylideneamino]imidazole-4-carboxamide. The protein operates within amino-acid biosynthesis; L-histidine biosynthesis; L-histidine from 5-phospho-alpha-D-ribose 1-diphosphate: step 3/9. Functionally, catalyzes the hydrolysis of the adenine ring of phosphoribosyl-AMP. The chain is Phosphoribosyl-AMP cyclohydrolase from Cupriavidus taiwanensis (strain DSM 17343 / BCRC 17206 / CCUG 44338 / CIP 107171 / LMG 19424 / R1) (Ralstonia taiwanensis (strain LMG 19424)).